The following is a 338-amino-acid chain: Ornithine carbamoyltransferase, catabolic (338 aa).

Residues 58–61 (STRT), Q85, R109, and 136–139 (HPTQ) each bind carbamoyl phosphate. L-ornithine-binding positions include N168, D232, and 236–237 (SM). Residues 273–274 (CL) and R318 contribute to the carbamoyl phosphate site.

The protein belongs to the aspartate/ornithine carbamoyltransferase superfamily. OTCase family.

The protein localises to the cytoplasm. It carries out the reaction carbamoyl phosphate + L-ornithine = L-citrulline + phosphate + H(+). Its pathway is amino-acid degradation; L-arginine degradation via ADI pathway; carbamoyl phosphate from L-arginine: step 2/2. Functionally, reversibly catalyzes the transfer of the carbamoyl group from carbamoyl phosphate (CP) to the N(epsilon) atom of ornithine (ORN) to produce L-citrulline. The sequence is that of Ornithine carbamoyltransferase, catabolic from Streptococcus pneumoniae serotype 4 (strain ATCC BAA-334 / TIGR4).